The sequence spans 87 residues: U-scoloptoxin(23)-Er1a (87 aa).

The first 29 residues, 1 to 29 (MSLIVVRTHSFLFVLVLLLFASVFHSVDS), serve as a signal peptide directing secretion. Positions 32 to 54 (FNPNGRYGRRDSASALSDASENK) are disordered.

The protein belongs to the scoloptoxin-23 family. Expressed by the venom gland.

The protein localises to the secreted. The polypeptide is U-scoloptoxin(23)-Er1a (Ethmostigmus rubripes (Giant centipede)).